Reading from the N-terminus, the 349-residue chain is MIINSLKRFGITTGAAASAAAKAAVMGLLNREKRNTVVIPTPIGLRLEIPVEKVEIDSGIACAEVKKFSGDNPDILDGLVIRCCAKLNESNEIVIVGEKGVGKVTRSGLKATMGETAISPTVRDMVINAIREVTDKGIQITIEVPNGDIIAENTLNKMVGIVGGISILGTTGIETPVSDDDYLEHIKCELNVIRQSYDFVVIAPGNSAAKYASKLFDSNSIIKVGDRIGDSIKLASSVFRKVILAGLPAKLLKVYAGIFNTHYSQGDARLESLTHASVLAGLPYDVLTKITNALSVEEAFTYMTKEQRRKVMKIVAEKILSRIKSFNGDINFCVIIFDYDGESLSRVGC.

The protein belongs to the CbiD family.

It catalyses the reaction Co-precorrin-5B + S-adenosyl-L-methionine = Co-precorrin-6A + S-adenosyl-L-homocysteine. The protein operates within cofactor biosynthesis; adenosylcobalamin biosynthesis; cob(II)yrinate a,c-diamide from sirohydrochlorin (anaerobic route): step 6/10. Its function is as follows. Catalyzes the methylation of C-1 in cobalt-precorrin-5B to form cobalt-precorrin-6A. The polypeptide is Cobalt-precorrin-5B C(1)-methyltransferase (Saccharolobus islandicus (strain Y.N.15.51 / Yellowstone #2) (Sulfolobus islandicus)).